The following is an 868-amino-acid chain: uncharacterized protein (868 aa).

It localises to the cytoplasm. The protein resides in the nucleus. This is an uncharacterized protein from Schizosaccharomyces pombe (strain 972 / ATCC 24843) (Fission yeast).